We begin with the raw amino-acid sequence, 181 residues long: Oligoribonuclease (181 aa).

In terms of domain architecture, Exonuclease spans 8 to 171; it reads LVWIDMEMTG…DDIRESIAEL (164 aa). Tyr129 is a catalytic residue.

Belongs to the oligoribonuclease family.

Its subcellular location is the cytoplasm. 3'-to-5' exoribonuclease specific for small oligoribonucleotides. This chain is Oligoribonuclease, found in Aeromonas hydrophila subsp. hydrophila (strain ATCC 7966 / DSM 30187 / BCRC 13018 / CCUG 14551 / JCM 1027 / KCTC 2358 / NCIMB 9240 / NCTC 8049).